A 1188-amino-acid chain; its full sequence is Probable RNA helicase armi (1188 aa).

723-730 (GPPGSGKT) is a binding site for ATP. A DEAG box motif is present at residues 862–865 (DEAG).

The protein belongs to the DNA2/NAM7 helicase family. SDE3 subfamily. In terms of assembly, forms a complex with piwi and fs(1)Yb; this interaction is required for proper piRNA loading and nuclear localization of piwi. The interaction of piwi and fs(1)Yb is likely to occur via armi. In terms of tissue distribution, abundant in oocytes and syncytial blastoderm. Expressed at low level throughout development, including somatic tissues. First apparent early in oogenesis, in the cytoplasm of stem cells and mitotically dividing cystoblasts. In regions 2a and 2b of the germarium, it is most concentrated in the center of the germline cysts, where the pro-oocyte is located. In stage 1 and early stage 2 egg chambers, it accumulates at the anterior of the oocyte, near the ring canals. It also extends through the ring canals forming a branched structure that links the early oocyte with adjacent nurse cells. In stage 3 cysts, it accumulates at the posterior cortex and localizes to extensions that pass through the oocyte into the nurse cells. Through stages 4 to 7, it continues to be somewhat enriched at the posterior cortex of the oocyte, but at significantly lower level. In stage 9 to 10 egg chambers, it is found throughout the cytoplasm of the oocyte and nurse cells, with slight enrichment at the oocyte cortex.

It is found in the cytoplasm. It carries out the reaction ATP + H2O = ADP + phosphate + H(+). Functionally, probable RNA helicase required for axial polarization of the oocyte during early and mid oogenesis. Plays a central role in RNA interference (RNAi) process, a process that mediates mRNA destruction of translational repression. Required for the assembly of the RISC complex, a complex required for target RNA destruction or repression. May be required in the RISC assembly to unwind miRNAs, in the production of single-stranded miRNA from the double-stranded miRNA, a key step in RISC formation. Required both for the translational control of oskar (osk) mRNA and cytoskeletal polarization in the oocyte. Required for somatic primary piRNA biogenesis. Involved in repression of long interspersed nuclear elements (LINEs) including HeT-A, I-element and TART LINEs. The sequence is that of Probable RNA helicase armi from Drosophila melanogaster (Fruit fly).